Here is an 859-residue protein sequence, read N- to C-terminus: Autoinducer 2 sensor kinase/phosphatase LuxQ (859 aa).

2 consecutive transmembrane segments (helical) span residues 15 to 35 and 280 to 300; these read ATLI…GIFI and IQHI…ALMS. The 223-residue stretch at 489 to 711 folds into the Histidine kinase domain; the sequence is KMSHEIRTPI…TFVITLPVKD (223 aa). A Phosphohistidine; by autocatalysis modification is found at His-492. The Response regulatory domain maps to 736–851; it reads KVLLVEDNHT…ALHEAFVDFK (116 aa). Position 785 is a 4-aspartylphosphate (Asp-785).

In terms of assembly, binds the complex formed by AI-2 and LuxP.

The protein localises to the cell inner membrane. The enzyme catalyses ATP + protein L-histidine = ADP + protein N-phospho-L-histidine.. At low cell density, in absence of AI-2 (autoinducer 2), LuxQ has a kinase activity and autophosphorylates on a histidine residue. The phosphoryl group is then transferred to an aspartate residue in the response regulator domain. The phosphoryl group is transferred to LuxU, and ultimately to LuxO. At high cell density, in the presence of AI-2, the kinase activity is inactivated, and the response regulator domain has a phosphatase activity. In Vibrio harveyi (Beneckea harveyi), this protein is Autoinducer 2 sensor kinase/phosphatase LuxQ (luxQ).